A 223-amino-acid chain; its full sequence is Glutathione-specific gamma-glutamylcyclotransferase 1 (223 aa).

Residues 1-26 (MKQESASQSTPPPSLSPAPSSAQPSW) are disordered. A substrate-binding site is contributed by 36 to 41 (IFGYGS). The active-site Proton acceptor is the Glu116.

Belongs to the gamma-glutamylcyclotransferase family. ChaC subfamily. Interacts with NOTCH1 (via extracellular region). Widely expressed, with high expression in forebrain and anterior spinal cord. Expressed at intermediate level in the dorsal aorta and heart. Present throughout adult brain (at protein level).

It is found in the cytoplasm. It localises to the cytosol. Its subcellular location is the golgi apparatus. The protein resides in the trans-Golgi network. The catalysed reaction is glutathione = L-cysteinylglycine + 5-oxo-L-proline. In terms of biological role, catalyzes the cleavage of glutathione into 5-oxo-L-proline and a Cys-Gly dipeptide. Acts specifically on glutathione, but not on other gamma-glutamyl peptides. Glutathione depletion is an important factor for apoptosis initiation and execution. Acts as a pro-apoptotic component of the unfolded protein response pathway by mediating the pro-apoptotic effects of the ATF4-ATF3-DDIT3/CHOP cascade. Negative regulator of Notch signaling pathway involved in embryonic neurogenesis: acts by inhibiting Notch cleavage by furin, maintaining Notch in an immature inactive form, thereby promoting neurogenesis in embryos. This is Glutathione-specific gamma-glutamylcyclotransferase 1 from Mus musculus (Mouse).